The following is a 672-amino-acid chain: Flap endonuclease 1 (672 aa).

The N-domain stretch occupies residues 1-106 (MGIKGLIGFL…QTLAKRKLLR (106 aa)). Aspartate 34 provides a ligand contact to Mg(2+). Positions 47 and 72 each coordinate DNA. Mg(2+)-binding residues include aspartate 88, glutamate 160, glutamate 162, aspartate 181, and aspartate 183. Residues 124–252 (AIRKYVGRTV…KTAYNLIKKH (129 aa)) form an I-domain region. Glutamate 160 is a DNA binding site. Residues glycine 230 and aspartate 232 each contribute to the DNA site. A Mg(2+)-binding site is contributed by aspartate 232. Positions 327 to 335 (TQLSLKSFF) are interaction with PCNA. The interval 361–436 (VESAVDSTSD…DAKKRNKRVP (76 aa)) is disordered. A compositionally biased stretch (basic and acidic residues) spans 370–382 (DDGKDEVPSDDKV).

Belongs to the XPG/RAD2 endonuclease family. FEN1 subfamily. Interacts with PCNA. Three molecules of FEN1 bind to one PCNA trimer with each molecule binding to one PCNA monomer. PCNA stimulates the nuclease activity without altering cleavage specificity. The cofactor is Mg(2+). Phosphorylated. Phosphorylation upon DNA damage induces relocalization to the nuclear plasma.

The protein resides in the nucleus. It is found in the nucleolus. It localises to the nucleoplasm. Its subcellular location is the mitochondrion. In terms of biological role, structure-specific nuclease with 5'-flap endonuclease and 5'-3' exonuclease activities involved in DNA replication and repair. During DNA replication, cleaves the 5'-overhanging flap structure that is generated by displacement synthesis when DNA polymerase encounters the 5'-end of a downstream Okazaki fragment. It enters the flap from the 5'-end and then tracks to cleave the flap base, leaving a nick for ligation. Also involved in the long patch base excision repair (LP-BER) pathway, by cleaving within the apurinic/apyrimidinic (AP) site-terminated flap. Acts as a genome stabilization factor that prevents flaps from equilibrating into structures that lead to duplications and deletions. Also possesses 5'-3' exonuclease activity on nicked or gapped double-stranded DNA, and exhibits RNase H activity. Also involved in replication and repair of rDNA and in repairing mitochondrial DNA. This chain is Flap endonuclease 1, found in Babesia bovis.